Here is a 418-residue protein sequence, read N- to C-terminus: Trans-acting enoyl reductase (418 aa).

Belongs to the saccharopine dehydrogenase family. Enoyl reductase subfamily.

Functionally, involved in the reduction of the double bond between C-4 and C-5 during phthiocerol dimycocerosates (DIM A) and glycosylated phenolphthiocerol dimycocerosates (PGL) biosynthesis. This chain is Trans-acting enoyl reductase, found in Mycobacterium ulcerans (strain Agy99).